We begin with the raw amino-acid sequence, 248 residues long: Ubiquinone biosynthesis O-methyltransferase (248 aa).

The S-adenosyl-L-methionine site is built by R41, G72, D93, and M136.

This sequence belongs to the methyltransferase superfamily. UbiG/COQ3 family.

It carries out the reaction a 3-demethylubiquinol + S-adenosyl-L-methionine = a ubiquinol + S-adenosyl-L-homocysteine + H(+). It catalyses the reaction a 3-(all-trans-polyprenyl)benzene-1,2-diol + S-adenosyl-L-methionine = a 2-methoxy-6-(all-trans-polyprenyl)phenol + S-adenosyl-L-homocysteine + H(+). Its pathway is cofactor biosynthesis; ubiquinone biosynthesis. O-methyltransferase that catalyzes the 2 O-methylation steps in the ubiquinone biosynthetic pathway. The sequence is that of Ubiquinone biosynthesis O-methyltransferase from Sinorhizobium fredii (strain NBRC 101917 / NGR234).